Here is a 287-residue protein sequence, read N- to C-terminus: Zinc finger protein SNAI3 (287 aa).

The segment at 1–20 (MPRSFLVKTHSSHRVPNYGK) is SNAG domain. 4 C2H2-type zinc fingers span residues 147-169 (FECIHCHRPYHTLAGLARHQQLH), 178-200 (FTCRYCDKEYASLGALKMHIRTH), 204-226 (CICKVCGKAFSRPWLLQGHIRTH), and 232-254 (YTCSHCSRAFADRSNLRAHLQTH). The segment at 260–282 (YRCAVCPKAFSRMSLLARHEEAG) adopts a C2H2-type 5; degenerate zinc-finger fold.

Belongs to the snail C2H2-type zinc-finger protein family. Highly expressed in skeletal muscle and thymus. Lower expression in heart, lung and spleen.

The protein localises to the nucleus. Functionally, seems to inhibit myoblast differentiation. Transcriptional repressor of E-box-dependent transactivation of downstream myogenic bHLHs genes. Binds preferentially to the canonical E-box sequences 5'-CAGGTG-3' and 5'-CACCTG-3'. In Mus musculus (Mouse), this protein is Zinc finger protein SNAI3 (Snai3).